The following is a 466-amino-acid chain: Sushi repeat-containing protein SRPX2 (466 aa).

An N-terminal signal peptide occupies residues 1 to 24 (MKTGSLTQRGALLLLLLLAPAVTP). 3 Sushi domains span residues 70-120 (ATCY…YCRQ), 121-179 (MRCH…VCVD), and 263-322 (RRCP…VCTP). 4 disulfides stabilise this stretch: Cys-72-Cys-106, Cys-92-Cys-118, Cys-123-Cys-164, and Cys-150-Cys-177. Residues 178-262 (VDIDPPKIRC…SCKFIVKVQV (85 aa)) form the HYR domain. 2 disulfides stabilise this stretch: Cys-265–Cys-307 and Cys-293–Cys-320.

As to quaternary structure, forms homooligomers. Interacts with PLAUR (via the UPAR/Ly6 domains), ADAMTS4 and CTSB. Interacts with HGF; the interaction increases the mitogenic activity of HGF. Post-translationally, contains chondroitin sulfate chains.

Its subcellular location is the secreted. The protein localises to the cytoplasm. It localises to the cell surface. It is found in the synapse. Functionally, acts as a ligand for the urokinase plasminogen activator surface receptor. Plays a role in angiogenesis by inducing endothelial cell migration and the formation of vascular network (cords). Involved in cellular migration and adhesion. Increases the phosphorylation levels of FAK. Interacts with and increases the mitogenic activity of HGF. Promotes synapse formation. The sequence is that of Sushi repeat-containing protein SRPX2 from Rattus norvegicus (Rat).